A 445-amino-acid chain; its full sequence is Exodeoxyribonuclease 7 large subunit (445 aa).

The protein belongs to the XseA family. Heterooligomer composed of large and small subunits.

It localises to the cytoplasm. It carries out the reaction Exonucleolytic cleavage in either 5'- to 3'- or 3'- to 5'-direction to yield nucleoside 5'-phosphates.. Its function is as follows. Bidirectionally degrades single-stranded DNA into large acid-insoluble oligonucleotides, which are then degraded further into small acid-soluble oligonucleotides. The polypeptide is Exodeoxyribonuclease 7 large subunit (Pasteurella multocida (strain Pm70)).